We begin with the raw amino-acid sequence, 263 residues long: Orotidine 5'-phosphate decarboxylase (263 aa).

Residues Asp38, 60–62 (KTH), 91–100 (DRKFADIGNT), Tyr213, and Arg232 each bind substrate. Lys93 functions as the Proton donor in the catalytic mechanism.

Belongs to the OMP decarboxylase family.

The enzyme catalyses orotidine 5'-phosphate + H(+) = UMP + CO2. It functions in the pathway pyrimidine metabolism; UMP biosynthesis via de novo pathway; UMP from orotate: step 2/2. This Rhizomucor pusillus protein is Orotidine 5'-phosphate decarboxylase (PYR4).